Here is a 341-residue protein sequence, read N- to C-terminus: Shk1 kinase-binding protein 15 (341 aa).

WD repeat units lie at residues 33–70, 77–114, 119–157, 197–234, and 237–274; these read AHEG…QIAD, IANA…LVHT, SHKG…GGKV, SSKS…ILHE, and AHKK…VIEH. A disordered region spans residues 293–341; sequence NSEPKNVEDEAAKRQSLDSETSETSSESESESEYYSTSKQPPVKRTKHA. Residues 297-309 show a composition bias toward basic and acidic residues; the sequence is KNVEDEAAKRQSL.

Its function is as follows. Negatively regulates pak1/shk1 kinase activity leading to proper execution of cytoskeletal remodeling and cytokinetic functions. In terms of biological role, interacts with pak1/shk1. The chain is Shk1 kinase-binding protein 15 (skb15) from Schizosaccharomyces pombe (strain 972 / ATCC 24843) (Fission yeast).